Reading from the N-terminus, the 563-residue chain is Arginine--tRNA ligase (563 aa).

Positions 121–131 (PNIAKPFSIGH) match the 'HIGH' region motif.

Belongs to the class-I aminoacyl-tRNA synthetase family. As to quaternary structure, monomer.

The protein localises to the cytoplasm. The catalysed reaction is tRNA(Arg) + L-arginine + ATP = L-arginyl-tRNA(Arg) + AMP + diphosphate. The protein is Arginine--tRNA ligase of Streptococcus pyogenes serotype M1.